Here is a 393-residue protein sequence, read N- to C-terminus: Acetylornithine aminotransferase (393 aa).

Residues 102 to 103 (GA) and phenylalanine 136 each bind pyridoxal 5'-phosphate. Arginine 139 provides a ligand contact to N(2)-acetyl-L-ornithine. 219-222 (DEVQ) is a pyridoxal 5'-phosphate binding site. N6-(pyridoxal phosphate)lysine is present on lysine 248. A N(2)-acetyl-L-ornithine-binding site is contributed by serine 274. Threonine 275 is a binding site for pyridoxal 5'-phosphate.

It belongs to the class-III pyridoxal-phosphate-dependent aminotransferase family. ArgD subfamily. As to quaternary structure, homodimer. Requires pyridoxal 5'-phosphate as cofactor.

Its subcellular location is the cytoplasm. It carries out the reaction N(2)-acetyl-L-ornithine + 2-oxoglutarate = N-acetyl-L-glutamate 5-semialdehyde + L-glutamate. The protein operates within amino-acid biosynthesis; L-arginine biosynthesis; N(2)-acetyl-L-ornithine from L-glutamate: step 4/4. This chain is Acetylornithine aminotransferase, found in Wolinella succinogenes (strain ATCC 29543 / DSM 1740 / CCUG 13145 / JCM 31913 / LMG 7466 / NCTC 11488 / FDC 602W) (Vibrio succinogenes).